Here is a 374-residue protein sequence, read N- to C-terminus: Alanine racemase (374 aa).

The active-site Proton acceptor; specific for D-alanine is K34. K34 carries the N6-(pyridoxal phosphate)lysine modification. Residue R147 participates in substrate binding. The active-site Proton acceptor; specific for L-alanine is the Y271. M319 serves as a coordination point for substrate.

This sequence belongs to the alanine racemase family. Pyridoxal 5'-phosphate serves as cofactor.

It catalyses the reaction L-alanine = D-alanine. The protein operates within amino-acid biosynthesis; D-alanine biosynthesis; D-alanine from L-alanine: step 1/1. Catalyzes the interconversion of L-alanine and D-alanine. May also act on other amino acids. In Actinobacillus pleuropneumoniae serotype 5b (strain L20), this protein is Alanine racemase (alr).